A 532-amino-acid polypeptide reads, in one-letter code: Muscarinic acetylcholine receptor M5 (532 aa).

Over 1–29 the chain is Extracellular; that stretch reads MEGDSYGNATTINGTPVNHQPLERHRLWE. Asn8 carries N-linked (GlcNAc...) asparagine glycosylation. Residues 30–53 traverse the membrane as a helical segment; that stretch reads VITIAAVTAVVSLITIVGNVLVMI. The Cytoplasmic portion of the chain corresponds to 54–66; it reads SFKVNSQLKTVNN. The helical transmembrane segment at 67-87 threads the bilayer; the sequence is YYLLSLACADLIIGIFSMNLY. Residues 88–104 are Extracellular-facing; that stretch reads TTYILMGRWALGSLACD. The chain crosses the membrane as a helical span at residues 105–126; sequence LWLALDYVASNASVMNLLVISF. The Cytoplasmic segment spans residues 127 to 146; it reads DRYFSITRPLTYRAKRTPKR. A helical transmembrane segment spans residues 147 to 169; sequence AGIMIGLAWLISFILWAPAILCW. The Extracellular portion of the chain corresponds to 170–191; it reads QYLVGKRTVPPDECQIQFLSEP. A helical membrane pass occupies residues 192 to 214; sequence TITFGTAIAAFYIPVSVMTILYC. Topologically, residues 215-443 are cytoplasmic; the sequence is RIYRETEKRT…LVKERKAAQT (229 aa). The tract at residues 263-294 is disordered; sequence QRERNQASRSSSHRSTSITGKPSQATGPSTNW. Over residues 270–279 the composition is skewed to low complexity; the sequence is SRSSSHRSTS. The span at 280–294 shows a compositional bias: polar residues; sequence ITGKPSQATGPSTNW. A helical transmembrane segment spans residues 444–464; it reads LSAILLAFIITWTPYNIMVLV. Over 465–478 the chain is Extracellular; that stretch reads STFCDKCVPVALWH. A helical membrane pass occupies residues 479–498; that stretch reads LGYWLCYVNSTVNPICYALC. The Cytoplasmic segment spans residues 499 to 532; that stretch reads NRTFRKTFKMLLLCQWKKKKVEEKLYWQGNSKLP. A phosphothreonine mark is found at Thr501 and Thr505.

The protein belongs to the G-protein coupled receptor 1 family. Muscarinic acetylcholine receptor subfamily. CHRM5 sub-subfamily.

It is found in the cell membrane. It localises to the postsynaptic cell membrane. The muscarinic acetylcholine receptor mediates various cellular responses, including inhibition of adenylate cyclase, breakdown of phosphoinositides and modulation of potassium channels through the action of G proteins. Primary transducing effect is Pi turnover. The protein is Muscarinic acetylcholine receptor M5 (CHRM5) of Saimiri boliviensis boliviensis (Bolivian squirrel monkey).